The primary structure comprises 536 residues: Cytochrome P450 monooxygenase fscF (536 aa).

The chain crosses the membrane as a helical span at residues 9–29 (VSWLCALFTAIALYCIAVAFY). Position 464 (Cys464) interacts with heme.

Belongs to the cytochrome P450 family. The cofactor is heme.

The protein localises to the membrane. It functions in the pathway secondary metabolite biosynthesis. In terms of biological role, cytochrome P450 monooxygenase; part of the fragmented gene cluster that mediates the biosynthesis of fusarochromene, a tryptophan-derived metabolite closely related to a group of mycotoxins including fusarochromanone. Within the pathway, fscF catalyzes the epoxidation of desacetylfusarochromene which opens the way to the production of fusarochromanones. The first step of the pathway is the epimerization of L-tryptophan to D-tryptophan in the presence of the NRPS-like tryptophan epimerase fscC. D-tryptophan is subsequently hydroxylated by the tryptophan 6-hydroxylase fscE to yield 6-hydroxytryptophan. The pyrrole ring undergoes cleavaged by the tryptophan 2,3-dioxygenase fscD and is finally converted to 4-hydroxykyrunenine by the hydrolase fscH. The NRPS-like oxidoreductase fscA reduces the carboxyl group to primary alcohol and the DMATS-type prenyltransferase fscG performs prenylation, followed by the formation of a chromene ring catalyzed by the oxidoreductase fscI, which leads to desacetylfusarochromene. Epoxidation by fscF and rearrangement reactions of chromene double bonds convert compound desacetylfusarochromene to fusarochromanones. Although specific acetyltransferases were not found near the fsc gene cluster, several predicted enzymes containing the N-acetyltransferase superfamily domain are present in the genome of F.equiseti. These predicted enzymes may have the potential to convert desacetylfusarochromene to fusarochromene. In Fusarium equiseti (Fusarium scirpi), this protein is Cytochrome P450 monooxygenase fscF.